The sequence spans 1013 residues: GTPase-activating protein BEM3 (1013 aa).

4 disordered regions span residues 90-197, 258-277, 282-301, and 307-421; these read TVVE…GSPA, GSRY…PESI, SDLQ…TDLG, and VDTT…HQSK. Polar residues predominate over residues 143–160; sequence QEATSGAQQVPLLTSSKS. Composition is skewed to polar residues over residues 309 to 319, 333 to 388, and 404 to 418; these read TTFNAEDNPTG, TLQN…TSSN, and KSYS…SNSH. One can recognise a PH domain in the interval 555 to 662; the sequence is EFAKEGMLLV…WISVLTTLCD (108 aa). Residues 702–726 are disordered; that stretch reads AMDATSPTRPNDPNPVSLTSEEEKE. Positions 706–720 are enriched in polar residues; sequence TSPTRPNDPNPVSLT. In terms of domain architecture, Rho-GAP spans 799 to 1013; that stretch reads LQLSSHPYQG…PPVNIHIPQI (215 aa).

It localises to the cytoplasm. In terms of biological role, GTPase-activating protein (GAP) for CDC42 and less efficiently for RHO1. Negative regulator of the pheromone-response pathway through the STE20 protein kinase. This chain is GTPase-activating protein BEM3 (BEM3), found in Eremothecium gossypii (strain ATCC 10895 / CBS 109.51 / FGSC 9923 / NRRL Y-1056) (Yeast).